The sequence spans 329 residues: uncharacterized protein (329 aa).

One can recognise an SIS domain in the interval 38–184 (IVKLILKSQE…MACLMRAKNF (147 aa)). 56–61 (GVGKSA) is an ATP binding site. CBS domains lie at 211-267 (QTTN…GLSL) and 276-329 (TLKP…GLKA).

This sequence belongs to the SIS family. GutQ/KpsF subfamily.

This is an uncharacterized protein from Helicobacter pylori (strain J99 / ATCC 700824) (Campylobacter pylori J99).